The sequence spans 700 residues: Putative cysteine-rich receptor-like protein kinase 30 (700 aa).

The N-terminal stretch at 1-24 (MRQNNLFSLIFWLVPVSLIIVVSA) is a signal peptide. Gnk2-homologous domains follow at residues 25-129 (QLCS…NQPS) and 135-250 (LESV…LYPF). The Extracellular segment spans residues 25–285 (QLCSEKFGTF…KDEKTIHTGT (261 aa)). Asn63, Asn105, Asn146, Asn150, and Asn191 each carry an N-linked (GlcNAc...) asparagine glycan. A helical membrane pass occupies residues 286–306 (IIGIVIVVAMVIIMALLALGV). The Cytoplasmic segment spans residues 307 to 700 (SVCRSRKKYQ…SKSMYRNTED (394 aa)). The Protein kinase domain occupies 346–626 (FLASNKIGQG…IFQMLTNSSI (281 aa)). ATP is bound by residues 352 to 360 (IGQGGFGEV) and Lys374. Asp474 (proton acceptor) is an active-site residue. Ser478 bears the Phosphoserine mark. Thr514 bears the Phosphothreonine mark. Tyr522 is subject to Phosphotyrosine.

The protein belongs to the protein kinase superfamily. Ser/Thr protein kinase family. CRK subfamily.

The protein resides in the membrane. It carries out the reaction L-seryl-[protein] + ATP = O-phospho-L-seryl-[protein] + ADP + H(+). The catalysed reaction is L-threonyl-[protein] + ATP = O-phospho-L-threonyl-[protein] + ADP + H(+). The chain is Putative cysteine-rich receptor-like protein kinase 30 (CRK30) from Arabidopsis thaliana (Mouse-ear cress).